The following is a 436-amino-acid chain: Enolase (436 aa).

Glutamine 167 provides a ligand contact to (2R)-2-phosphoglycerate. Residue glutamate 209 is the Proton donor of the active site. The Mg(2+) site is built by aspartate 246, glutamate 291, and aspartate 318. (2R)-2-phosphoglycerate contacts are provided by lysine 343, arginine 372, serine 373, and lysine 394. The active-site Proton acceptor is the lysine 343.

The protein belongs to the enolase family. Component of the RNA degradosome, a multiprotein complex involved in RNA processing and mRNA degradation. Requires Mg(2+) as cofactor.

It is found in the cytoplasm. The protein localises to the secreted. The protein resides in the cell surface. It carries out the reaction (2R)-2-phosphoglycerate = phosphoenolpyruvate + H2O. Its pathway is carbohydrate degradation; glycolysis; pyruvate from D-glyceraldehyde 3-phosphate: step 4/5. Its function is as follows. Catalyzes the reversible conversion of 2-phosphoglycerate (2-PG) into phosphoenolpyruvate (PEP). It is essential for the degradation of carbohydrates via glycolysis. This chain is Enolase, found in Haemophilus influenzae (strain PittGG).